The primary structure comprises 91 residues: Small ribosomal subunit protein uS19 (91 aa).

The protein belongs to the universal ribosomal protein uS19 family.

Functionally, protein S19 forms a complex with S13 that binds strongly to the 16S ribosomal RNA. The chain is Small ribosomal subunit protein uS19 (rpsS) from Mycoplasmopsis pulmonis (strain UAB CTIP) (Mycoplasma pulmonis).